A 432-amino-acid chain; its full sequence is Thiol-specific monooxygenase (432 aa).

FAD-binding positions include 13–17 and 46–47; these read GGGPG and VW. NADP(+) is bound at residue 65–66; the sequence is TN. 117–118 lines the FAD pocket; it reads EV. 199–202 contacts NADP(+); it reads SGQD.

The protein belongs to the FMO family. Monomer. FAD is required as a cofactor.

In terms of biological role, flavin-dependent oxidation of thiol-containing compounds. Probably required for the correct folding of disulfide-bonded proteins. This is Thiol-specific monooxygenase (FMO1) from Saccharomyces cerevisiae (strain ATCC 204508 / S288c) (Baker's yeast).